Here is a 167-residue protein sequence, read N- to C-terminus: MAKLEAQQKDDLQEKLIAVNRVSKVVKGGRIFSFTALTVVGDGNGKIGYGYGKAREVPAAIQKAMEKARRNMVTVELNAGTLHHPVKGRHTGSRVYMQPASQGTGIIAGGAMRAVLEVAGVHNVLSKAYGSTNPINIVRATVDALVHMKSPSQIAAKRGLNVDEIRG.

An S5 DRBM domain is found at L12–V75.

It belongs to the universal ribosomal protein uS5 family. As to quaternary structure, part of the 30S ribosomal subunit. Contacts proteins S4 and S8.

In terms of biological role, with S4 and S12 plays an important role in translational accuracy. Functionally, located at the back of the 30S subunit body where it stabilizes the conformation of the head with respect to the body. The sequence is that of Small ribosomal subunit protein uS5 from Shewanella sp. (strain W3-18-1).